We begin with the raw amino-acid sequence, 305 residues long: Probable GTP 3',8-cyclase (305 aa).

In terms of domain architecture, Radical SAM core spans 6–233; the sequence is RHGRPVMSLR…MQDRKKYYID (228 aa). Arginine 15 contacts GTP. [4Fe-4S] cluster-binding residues include cysteine 22 and cysteine 26. Tyrosine 28 is an S-adenosyl-L-methionine binding site. Cysteine 29 serves as a coordination point for [4Fe-4S] cluster. Arginine 62 provides a ligand contact to GTP. Glycine 66 is a binding site for S-adenosyl-L-methionine. Threonine 92 lines the GTP pocket. Serine 116 serves as a coordination point for S-adenosyl-L-methionine. Position 153 (lysine 153) interacts with GTP. Residues cysteine 249 and cysteine 252 each contribute to the [4Fe-4S] cluster site. 254–256 provides a ligand contact to GTP; it reads RLR. Residue cysteine 266 coordinates [4Fe-4S] cluster.

Belongs to the radical SAM superfamily. MoaA family. The cofactor is [4Fe-4S] cluster.

The catalysed reaction is GTP + AH2 + S-adenosyl-L-methionine = (8S)-3',8-cyclo-7,8-dihydroguanosine 5'-triphosphate + 5'-deoxyadenosine + L-methionine + A + H(+). It participates in cofactor biosynthesis; molybdopterin biosynthesis. In terms of biological role, catalyzes the cyclization of GTP to (8S)-3',8-cyclo-7,8-dihydroguanosine 5'-triphosphate. This chain is Probable GTP 3',8-cyclase, found in Methanothermobacter thermautotrophicus (strain ATCC 29096 / DSM 1053 / JCM 10044 / NBRC 100330 / Delta H) (Methanobacterium thermoautotrophicum).